Reading from the N-terminus, the 343-residue chain is Protein RecA (343 aa).

An ATP-binding site is contributed by 66–73 (GPESSGKT).

The protein belongs to the RecA family.

The protein localises to the cytoplasm. Its function is as follows. Can catalyze the hydrolysis of ATP in the presence of single-stranded DNA, the ATP-dependent uptake of single-stranded DNA by duplex DNA, and the ATP-dependent hybridization of homologous single-stranded DNAs. It interacts with LexA causing its activation and leading to its autocatalytic cleavage. The protein is Protein RecA of Rickettsia africae (strain ESF-5).